The primary structure comprises 333 residues: MSCMKEQLIINILKDEHAPAQNKITVVGVGAVGMACAMSILMKDLADELALVDVIEDKLKGEMMDLQHGSLFLRTPKIVSGKDYSVTANSKLVIVTAGARQQEGESRLNLVQRNVNIFKFIIPNVVKYSPDATLLVVSNPVDVLTYVAWKISGFPKHRVIGSGCNLDSARFRYLMGEKLGVHAQSCHGWVVGEHGDSSVPVWSGVNVAGVSLQTLNPELGTDADKENWKEVHKQVVESAYEVIKLKGYTSWAIGLSVADLAETIMKNLRRVHPVSTKVKGLYGVHEDVFLSVPCVLGNQGITDVVKMTLKPEEEDRLRKSSDTLWGIQKELHF.

NAD(+)-binding positions include 30 to 58 and arginine 100; that span reads GAVG…IEDK. The substrate site is built by arginine 107, asparagine 139, and arginine 170. Asparagine 139 provides a ligand contact to NAD(+). The active-site Proton acceptor is the histidine 194. A substrate-binding site is contributed by threonine 249.

This sequence belongs to the LDH/MDH superfamily. LDH family. As to quaternary structure, homotetramer.

It localises to the cytoplasm. It catalyses the reaction (S)-lactate + NAD(+) = pyruvate + NADH + H(+). The protein operates within fermentation; pyruvate fermentation to lactate; (S)-lactate from pyruvate: step 1/1. Its function is as follows. Interconverts simultaneously and stereospecifically pyruvate and lactate with concomitant interconversion of NADH and NAD(+). In Ambystoma mexicanum (Axolotl), this protein is L-lactate dehydrogenase A chain (LDHA).